A 598-amino-acid polypeptide reads, in one-letter code: UvrABC system protein C (598 aa).

In terms of domain architecture, GIY-YIG spans 11–91 (QKPGVYIMHN…IKKYRPHYNI (81 aa)). The UVR domain maps to 195–230 (KTTIKKLKKDMNRYAKNMEFEKAAMLRDQIDTIKIT).

Belongs to the UvrC family. As to quaternary structure, interacts with UvrB in an incision complex.

It localises to the cytoplasm. Its function is as follows. The UvrABC repair system catalyzes the recognition and processing of DNA lesions. UvrC both incises the 5' and 3' sides of the lesion. The N-terminal half is responsible for the 3' incision and the C-terminal half is responsible for the 5' incision. This is UvrABC system protein C from Methanosphaera stadtmanae (strain ATCC 43021 / DSM 3091 / JCM 11832 / MCB-3).